A 370-amino-acid chain; its full sequence is Polyadenylate-binding protein 4-like (370 aa).

4 RRM domains span residues 10–88, 98–174, 190–267, and 293–369; these read ASLY…WSQR, GNVF…RFKN, TNVY…RAQK, and VKLY…LAQR.

The protein belongs to the polyadenylate-binding protein type-1 family.

Its function is as follows. May bind RNA. The chain is Polyadenylate-binding protein 4-like (PABPC4L) from Homo sapiens (Human).